Consider the following 823-residue polypeptide: ATM interactor (823 aa).

Positions 28–67 (GAAAAASGPWVPPGPRLRGSRPRPAGATQQPAVPAPPAGE) are disordered. A compositionally biased stretch (low complexity) spans 49-59 (PRPAGATQQPA). A C2H2-type 1 zinc finger spans residues 84–109 (ILCTVRGCGKILPNSPALNMHLVKSH). The C2H2-type 2; degenerate zinc-finger motif lies at 165–184 (HKCSKCSNSYGTEWDLKRHA). Basic and acidic residues predominate over residues 214 to 225 (HEIPAEHRDPPS). 3 disordered regions span residues 214 to 234 (HEIPAEHRDPPSKKRKMENCA), 268 to 289 (EPSFEDSCGSNTDKQTLTTPPR), and 610 to 634 (RSLLSDTNPGPDTQLPSGPAQNPGI). The tract at residues 223–442 (PPSKKRKMEN…ADSSVSSCSQ (220 aa)) is required for formation of RAD51 foci. Polar residues-rich tracts occupy residues 275–286 (CGSNTDKQTLTT) and 613–629 (LSDTNPGPDTQLPSGPA).

In terms of assembly, interacts via its C-terminus with ATM. Interacts with DYNLL1; this interaction inhibits ATMIN transcriptional activity and hence may play a role in a feedback loop whereby DYNLL1 inhibits transactivation of its own promoter by ATMIN. Ubiquitously expressed in normal tissues and cancer cell lines with highest levels in placenta and skeletal muscle.

Its subcellular location is the nucleus. In terms of biological role, transcription factor. Plays a crucial role in cell survival and RAD51 foci formation in response to methylating DNA damage. Involved in regulating the activity of ATM in the absence of DNA damage. May play a role in stabilizing ATM. Binds to the DYNLL1 promoter and activates its transcription. In Homo sapiens (Human), this protein is ATM interactor (ATMIN).